We begin with the raw amino-acid sequence, 266 residues long: Tryptophan synthase alpha chain (266 aa).

Catalysis depends on proton acceptor residues Glu51 and Asp62.

It belongs to the TrpA family. As to quaternary structure, tetramer of two alpha and two beta chains.

The enzyme catalyses (1S,2R)-1-C-(indol-3-yl)glycerol 3-phosphate + L-serine = D-glyceraldehyde 3-phosphate + L-tryptophan + H2O. The protein operates within amino-acid biosynthesis; L-tryptophan biosynthesis; L-tryptophan from chorismate: step 5/5. Its function is as follows. The alpha subunit is responsible for the aldol cleavage of indoleglycerol phosphate to indole and glyceraldehyde 3-phosphate. The sequence is that of Tryptophan synthase alpha chain from Thermosynechococcus vestitus (strain NIES-2133 / IAM M-273 / BP-1).